We begin with the raw amino-acid sequence, 367 residues long: Probable dual-specificity RNA methyltransferase RlmN (367 aa).

Residue glutamate 92 is the Proton acceptor of the active site. In terms of domain architecture, Radical SAM core spans 98–326; the sequence is QEYGLSVCVT…YDTLKKNGIN (229 aa). Cysteine 105 and cysteine 341 are disulfide-bonded. [4Fe-4S] cluster-binding residues include cysteine 112, cysteine 116, and cysteine 119. S-adenosyl-L-methionine contacts are provided by residues 164-165, serine 196, 219-221, and asparagine 297; these read GE and SLH. The S-methylcysteine intermediate role is filled by cysteine 341.

It belongs to the radical SAM superfamily. RlmN family. Requires [4Fe-4S] cluster as cofactor.

Its subcellular location is the cytoplasm. The enzyme catalyses adenosine(2503) in 23S rRNA + 2 reduced [2Fe-2S]-[ferredoxin] + 2 S-adenosyl-L-methionine = 2-methyladenosine(2503) in 23S rRNA + 5'-deoxyadenosine + L-methionine + 2 oxidized [2Fe-2S]-[ferredoxin] + S-adenosyl-L-homocysteine. The catalysed reaction is adenosine(37) in tRNA + 2 reduced [2Fe-2S]-[ferredoxin] + 2 S-adenosyl-L-methionine = 2-methyladenosine(37) in tRNA + 5'-deoxyadenosine + L-methionine + 2 oxidized [2Fe-2S]-[ferredoxin] + S-adenosyl-L-homocysteine. In terms of biological role, specifically methylates position 2 of adenine 2503 in 23S rRNA and position 2 of adenine 37 in tRNAs. The protein is Probable dual-specificity RNA methyltransferase RlmN of Listeria innocua serovar 6a (strain ATCC BAA-680 / CLIP 11262).